The sequence spans 238 residues: tRNA1(Val) (adenine(37)-N6)-methyltransferase (238 aa).

This sequence belongs to the methyltransferase superfamily. tRNA (adenine-N(6)-)-methyltransferase family.

It localises to the cytoplasm. The enzyme catalyses adenosine(37) in tRNA1(Val) + S-adenosyl-L-methionine = N(6)-methyladenosine(37) in tRNA1(Val) + S-adenosyl-L-homocysteine + H(+). In terms of biological role, specifically methylates the adenine in position 37 of tRNA(1)(Val) (anticodon cmo5UAC). The polypeptide is tRNA1(Val) (adenine(37)-N6)-methyltransferase (Shewanella baltica (strain OS223)).